The following is a 55-amino-acid chain: Glycine-rich antimicrobial peptide Pg-AMP (55 aa).

Gly residues predominate over residues 18–39 (GYGGYGGGRYGGGYGSGRGQPV). Positions 18–55 (GYGGYGGGRYGGGYGSGRGQPVGQGVERSHDDNRNQPR) are disordered. Basic and acidic residues predominate over residues 44 to 55 (ERSHDDNRNQPR).

In terms of assembly, monomer and homodimer. Might act by homodimer formation.

Has antibacterial activity against the Gram-negative bacteria Klebsiella sp., Proteus sp., E.coli ATCC 8739 (MIC=72 ug/ml) and K.pneumoniae (MIC=32 ug/ml). Has no activity against the Gram-negative bacterium S.typhimurium or the Gram-positive bacterium S.aureus. Does not have antifungal activity against the human and plant pathogenic fungi F.oxysporum, A.fumigatus and R.solani. This Psidium guajava (Guava) protein is Glycine-rich antimicrobial peptide Pg-AMP.